A 439-amino-acid polypeptide reads, in one-letter code: Branched-chain amino acid permease BrnQ (439 aa).

The Cytoplasmic segment spans residues 1–9 (MTHQLRSRD). A helical membrane pass occupies residues 10 to 30 (IIALGFMTFALFVGAGNIIFP). The Periplasmic portion of the chain corresponds to 31–45 (PMVGLQAGEHVWTAA). Residues 46 to 66 (FGFLITAVGLPVLTVVALAKV) traverse the membrane as a helical segment. The Cytoplasmic segment spans residues 67 to 79 (GGGVDSLSTPIGK). Residues 80-100 (VAGVLLATVCYLAVGPLFATP) traverse the membrane as a helical segment. The Periplasmic portion of the chain corresponds to 101-118 (RTATVSFEVGIAPLTGDS). Residues 119-139 (ALPLFIYSLVYFAIVILVSLY) form a helical membrane-spanning segment. At 140 to 149 (PGKLLDTVGN) the chain is on the cytoplasmic side. Residues 150 to 170 (FLAPLKIIALVILSVAAIVWP) traverse the membrane as a helical segment. The Periplasmic segment spans residues 171–189 (AGSISTATEAYQNAAFSNG). The helical transmembrane segment at 190–210 (FVNGYLTMDTLGAMVFGIVIV) threads the bilayer. Residues 211–226 (NAARSRGVTEARLLTR) lie on the Cytoplasmic side of the membrane. A helical transmembrane segment spans residues 227–247 (YTVWAGLMAGVGLTLLYLALF). Topologically, residues 248 to 277 (RLGSDSASLVDQSANGAAILHAYVQHTFGG) are periplasmic. The helical transmembrane segment at 278-298 (GGSFLLAALIFIACLVTAVGL) threads the bilayer. Residues 299 to 316 (TCACAEFFAQYVPLSYRT) are Cytoplasmic-facing. A helical transmembrane segment spans residues 317 to 337 (LVFILGGFSMVVSNLGLSQLI). A topological domain (periplasmic) is located at residue Q338. The chain crosses the membrane as a helical span at residues 339-359 (ISVPVLTAIYPPCIALVVLSF). At 360-369 (TRSWWHNSSR) the chain is on the cytoplasmic side. The helical transmembrane segment at 370 to 390 (VIAPPMFISLLFGILDGIKAS) threads the bilayer. Topologically, residues 391–404 (AFSDILPSWAQRLP) are periplasmic. The helical transmembrane segment at 405–425 (LAEQGLAWLMPTVVMVVLAII) threads the bilayer. Residues 426–439 (WDRAAGRQVTSSAH) are Cytoplasmic-facing.

This sequence belongs to the branched chain amino acid transporter family.

The protein resides in the cell inner membrane. Functionally, liv-II branched chain amino acid transport system, which transports leucine, valine and isoleucine. This chain is Branched-chain amino acid permease BrnQ (brnQ), found in Escherichia coli O157:H7.